We begin with the raw amino-acid sequence, 255 residues long: NAD(P)H-quinone oxidoreductase subunit K, chloroplastic (255 aa).

The [4Fe-4S] cluster site is built by cysteine 47, cysteine 48, cysteine 112, and cysteine 143.

It belongs to the complex I 20 kDa subunit family. As to quaternary structure, NDH is composed of at least 16 different subunits, 5 of which are encoded in the nucleus. [4Fe-4S] cluster serves as cofactor.

The protein resides in the plastid. It is found in the chloroplast thylakoid membrane. It carries out the reaction a plastoquinone + NADH + (n+1) H(+)(in) = a plastoquinol + NAD(+) + n H(+)(out). The catalysed reaction is a plastoquinone + NADPH + (n+1) H(+)(in) = a plastoquinol + NADP(+) + n H(+)(out). Functionally, NDH shuttles electrons from NAD(P)H:plastoquinone, via FMN and iron-sulfur (Fe-S) centers, to quinones in the photosynthetic chain and possibly in a chloroplast respiratory chain. The immediate electron acceptor for the enzyme in this species is believed to be plastoquinone. Couples the redox reaction to proton translocation, and thus conserves the redox energy in a proton gradient. This chain is NAD(P)H-quinone oxidoreductase subunit K, chloroplastic, found in Zygnema circumcarinatum (Green alga).